The sequence spans 988 residues: Transposase for transposon Tn21 (988 aa).

Residues Gly-672–Ile-696 form a disordered region. The span at Gly-674–His-695 shows a compositional bias: polar residues.

This sequence belongs to the transposase 7 family.

Its function is as follows. Required for transposition of transposon Tn21. This chain is Transposase for transposon Tn21 (tnpA), found in Escherichia coli.